Reading from the N-terminus, the 156-residue chain is MPEAPGPAPAALPARGTLLAFDFGLARIGVAVGELETRRASALLTLHGEASAPRFAAIAKLLDEWRPVGLVVGMPSHLDGTPHEMTARCRRFANQLHGRFGLPVLECDERLSSAAADAALAEAGTHDWRARKQVLDAVAAQIILQHFLDTHGHAKP.

The protein belongs to the YqgF nuclease family.

It localises to the cytoplasm. Functionally, could be a nuclease involved in processing of the 5'-end of pre-16S rRNA. The polypeptide is Putative pre-16S rRNA nuclease (Aromatoleum aromaticum (strain DSM 19018 / LMG 30748 / EbN1) (Azoarcus sp. (strain EbN1))).